Consider the following 38-residue polypeptide: Cytochrome b6-f complex subunit 5 (38 aa).

A helical transmembrane segment spans residues 5 to 25 (LLSGIVLGSIPITLAGSFVTA).

It belongs to the PetG family. As to quaternary structure, the 4 large subunits of the cytochrome b6-f complex are cytochrome b6, subunit IV (17 kDa polypeptide, PetD), cytochrome f and the Rieske protein, while the 4 small subunits are PetG, PetL, PetM and PetN. The complex functions as a dimer.

It is found in the plastid. The protein resides in the chloroplast thylakoid membrane. Component of the cytochrome b6-f complex, which mediates electron transfer between photosystem II (PSII) and photosystem I (PSI), cyclic electron flow around PSI, and state transitions. PetG is required for either the stability or assembly of the cytochrome b6-f complex. The sequence is that of Cytochrome b6-f complex subunit 5 from Huperzia lucidula (Shining clubmoss).